The primary structure comprises 122 residues: Large ribosomal subunit protein bL12 (122 aa).

It belongs to the bacterial ribosomal protein bL12 family. Homodimer. Part of the ribosomal stalk of the 50S ribosomal subunit. Forms a multimeric L10(L12)X complex, where L10 forms an elongated spine to which 2 to 4 L12 dimers bind in a sequential fashion. Binds GTP-bound translation factors.

In terms of biological role, forms part of the ribosomal stalk which helps the ribosome interact with GTP-bound translation factors. Is thus essential for accurate translation. The sequence is that of Large ribosomal subunit protein bL12 from Vibrio vulnificus (strain CMCP6).